The following is a 525-amino-acid chain: PE-PGRS family protein PE_PGRS47 (525 aa).

Residues 1–93 enclose the PE domain; the sequence is MSFVIAAPEF…AYSYASAEAA (93 aa). A disordered region spans residues 506–525; that stretch reads VGGAGGLLEGQNGENGLLPS. The segment covering 514–525 has biased composition (low complexity); it reads EGQNGENGLLPS.

The protein belongs to the mycobacterial PE family. PGRS subfamily.

The protein localises to the secreted. Its subcellular location is the cell surface. It is found in the host cytoplasm. The protein resides in the host cytosol. Functionally, contributes to evasion of both innate and adaptive immunity. Inhibits autophagy in infected host phagocytes and inhibits major histocompatibility complex (MHC) class II antigen presentation by mycobacteria-infected dendritic cells. Has an important role in the growth and survival of M.tuberculosis, particularly during intracellular growth and in the later chronic phase of infection. The protein is PE-PGRS family protein PE_PGRS47 of Mycobacterium tuberculosis (strain ATCC 25618 / H37Rv).